The primary structure comprises 418 residues: MDKLVIEGGVPLRGEVSISGAKNAALPLMAASLLACGKHSFTNVPRLRDIHTMCNLLGHMGASSEHGATLNIDSGNIRALEAPYRLVKTMRASVLVLGPMLARHGFARVSLPGGCAIGARPINLHLSGLQEMGADIELEHGYVVARADRLRGATIIFDLVTVTGTENLMMAATLARGRTILKNTAREPEVVALADYLRKMGARIEGDGSSEIVVDGVEELTPSTFRVIPDRIEAGTYIAAAGITGGCLRLTNCEPAHLEAVIQKLRAAGLTIETGEGIVDVQSNGPIRSVDIKTWPYPAFPTDMQAQFMSLMTLGNGVSLITEQIFENRFMHVLELKRLGADIELDGRNARVCGVSHLSGAPVMATDLRASASLVLAALAATGVTEITRIYHLERGYEDMDGKLSAVGARIRRQVNGS.

22 to 23 (KN) lines the phosphoenolpyruvate pocket. Arg91 provides a ligand contact to UDP-N-acetyl-alpha-D-glucosamine. Cys115 serves as the catalytic Proton donor. Cys115 carries the 2-(S-cysteinyl)pyruvic acid O-phosphothioketal modification. Asp303 and Ile325 together coordinate UDP-N-acetyl-alpha-D-glucosamine.

Belongs to the EPSP synthase family. MurA subfamily.

It localises to the cytoplasm. It carries out the reaction phosphoenolpyruvate + UDP-N-acetyl-alpha-D-glucosamine = UDP-N-acetyl-3-O-(1-carboxyvinyl)-alpha-D-glucosamine + phosphate. The protein operates within cell wall biogenesis; peptidoglycan biosynthesis. Functionally, cell wall formation. Adds enolpyruvyl to UDP-N-acetylglucosamine. This chain is UDP-N-acetylglucosamine 1-carboxyvinyltransferase, found in Syntrophobacter fumaroxidans (strain DSM 10017 / MPOB).